The following is a 432-amino-acid chain: Acetylserotonin O-methyltransferase (432 aa).

S-adenosyl-L-methionine-binding positions include tyrosine 146, tryptophan 163, aspartate 209, 235-237 (GDF), and arginine 252. Histidine 255 serves as the catalytic Proton donor/acceptor. Aspartate 256, asparagine 302, and glutamine 306 together coordinate substrate. The tract at residues 373–432 (VPGARSDAAGTGSGTGNTGSGIMLQGETLESEVSAPQAGSDVGGAGNEPRSGTLKQGDWK) is disordered.

The protein belongs to the class I-like SAM-binding methyltransferase superfamily. Cation-independent O-methyltransferase family. Homodimer. Expressed predominantly in the pineal gland (at protein level). Very low expression, if any, in the retina.

The enzyme catalyses N-acetylserotonin + S-adenosyl-L-methionine = melatonin + S-adenosyl-L-homocysteine + H(+). It participates in aromatic compound metabolism; melatonin biosynthesis; melatonin from serotonin: step 1/2. In terms of biological role, catalyzes the transfer of a methyl group onto N-acetylserotonin, producing melatonin (N-acetyl-5-methoxytryptamine). This Rattus norvegicus (Rat) protein is Acetylserotonin O-methyltransferase (Asmt).